We begin with the raw amino-acid sequence, 142 residues long: Small ribosomal subunit protein bS6 (142 aa).

Residues 113 to 136 (IKKEPREPREPRAPREPKAEKIEE) are compositionally biased toward basic and acidic residues. The disordered stretch occupies residues 113-142 (IKKEPREPREPRAPREPKAEKIEEQTFSEE).

Belongs to the bacterial ribosomal protein bS6 family.

In terms of biological role, binds together with bS18 to 16S ribosomal RNA. This is Small ribosomal subunit protein bS6 from Campylobacter curvus (strain 525.92).